The primary structure comprises 135 residues: Putative large ribosomal subunit protein eL32' (135 aa).

This sequence belongs to the eukaryotic ribosomal protein eL32 family.

The sequence is that of Putative large ribosomal subunit protein eL32' (Rpl32-ps) from Mus musculus (Mouse).